Reading from the N-terminus, the 289-residue chain is O-methyltransferase asqN (289 aa).

D155 serves as a coordination point for S-adenosyl-L-methionine. The active-site Proton acceptor is H195.

This sequence belongs to the class I-like SAM-binding methyltransferase superfamily. Cation-independent O-methyltransferase family.

It functions in the pathway secondary metabolite biosynthesis. Its pathway is alkaloid biosynthesis. It participates in mycotoxin biosynthesis. O-methyltransferase; part of the gene cluster that mediates the biosynthesis of the aspoquinolone mycotoxins. The role of asqN within the aspoquinolone pathway has still to be determined. The first step of the pathway is catalyzed by the nonribosomal peptide synthetase asqK that condenses anthranilic acid and O-methyl-L-tyrosine to produce 4'-methoxycyclopeptin. 4'-methoxycyclopeptin is then converted to 4'-methoxydehydrocyclopeptin by the ketoglutarate-dependent dioxygenase asqJ. AsqJ also converts its first product 4'-methoxydehydrocyclopeptin to 4'-methoxycyclopenin. The following conversion of 4'-methoxycyclopenin into 4'-methoxyviridicatin is catalyzed by the cyclopenase asqI. 4'-methoxyviridicatin is the precursor of quinolone natural products, and is further converted to quinolinone B. The prenyltransferase asqH1 then catalyzes the canonical Friedel-Crafts alkylation of quinolinone B with dimethylallyl cation to yield dimethylallyl quinolone, which is subjected to FAD-dependent dehydrogenation by the FAD-linked oxidoreductase asqF to yield conjugated aryl diene. The delta(3') double bond then serves as the site of the second alkylation with DMAPP catalyzed by the prenyltransferase asqH2 to yield a carbenium ion intermediate, which can be attacked by H(2)O to yield a styrenyl quinolone containing a C3'-hydroxyprenyl chain. The FAD-dependent monooxygenase asqG performs epoxidation of the terminal C7'-C8' olefin. Finally, after dehydratation of the epoxide at C3 by asqC, the quinolone epoxide rearrangement protein asqO catalyzes an enzymatic 3-exo-tet cyclization to yield the cyclopropyl-THF ring system in aspoquinolone. The polypeptide is O-methyltransferase asqN (Emericella nidulans (strain FGSC A4 / ATCC 38163 / CBS 112.46 / NRRL 194 / M139) (Aspergillus nidulans)).